We begin with the raw amino-acid sequence, 164 residues long: LWamide neuropeptides (164 aa).

Residues 1-6 constitute a propeptide that is removed on maturation; that stretch reads RSADAQ. The interval 1-92 is disordered; the sequence is RSADAQQHGL…WGRSADAQQP (92 aa). Residues tryptophan 11 and tryptophan 20 each carry the tryptophan amide modification. A propeptide spanning residues 23–27 is cleaved from the precursor; that stretch reads SADAQ. A tryptophan amide mark is found at tryptophan 32 and tryptophan 41. Positions 44 to 49 are excised as a propeptide; sequence SAEPGQ. Residues tryptophan 53 and tryptophan 62 each carry the tryptophan amide modification. The propeptide occupies 65 to 70; that stretch reads SAEPLQ. Tryptophan amide is present on residues tryptophan 74 and tryptophan 83. Positions 86-90 are excised as a propeptide; it reads SADAQ. 3 positions are modified to tryptophan amide: tryptophan 95, tryptophan 106, and tryptophan 115. The propeptide occupies 118–123; it reads SADPGQ. Tryptophan amide occurs at positions 127 and 137. Positions 140–164 are excised as a propeptide; it reads SYEPPQFEDLEDLKKKSAIPKPSEQ.

Belongs to the LWamide neuropeptide family.

The protein localises to the secreted. Metamorphosin A may be part of an internal signaling system involved in control of metamorphosis. The sequence is that of LWamide neuropeptides from Actinia equina (Beadlet anemone).